The sequence spans 330 residues: Flotillin-like protein FloA (330 aa).

The next 2 helical transmembrane spans lie at 6–26 (LFLLLIIAAGIILLAVFFTFV) and 28–48 (VMLWISALAAGVKISIFTLIG).

Belongs to the flotillin-like FloA family. Homooligomerizes.

The protein resides in the cell membrane. Its subcellular location is the membrane raft. In terms of biological role, found in functional membrane microdomains (FMM) that may be equivalent to eukaryotic membrane rafts. FMMs are highly dynamic and increase in number as cells age. Flotillins are thought to be important factors in membrane fluidity. The protein is Flotillin-like protein FloA of Bacillus licheniformis (strain ATCC 14580 / DSM 13 / JCM 2505 / CCUG 7422 / NBRC 12200 / NCIMB 9375 / NCTC 10341 / NRRL NRS-1264 / Gibson 46).